A 624-amino-acid chain; its full sequence is tRNA uridine 5-carboxymethylaminomethyl modification enzyme MnmG (624 aa).

FAD is bound by residues 13-18 (GGGHAG), Val125, and Ser180. Residue 273–287 (GPRYCPSIEDKIVRF) coordinates NAD(+). Residue Gln370 coordinates FAD.

It belongs to the MnmG family. In terms of assembly, homodimer. Heterotetramer of two MnmE and two MnmG subunits. It depends on FAD as a cofactor.

It localises to the cytoplasm. Functionally, NAD-binding protein involved in the addition of a carboxymethylaminomethyl (cmnm) group at the wobble position (U34) of certain tRNAs, forming tRNA-cmnm(5)s(2)U34. The protein is tRNA uridine 5-carboxymethylaminomethyl modification enzyme MnmG of Legionella pneumophila (strain Lens).